The primary structure comprises 272 residues: Phosphatidylglycerol--prolipoprotein diacylglyceryl transferase (272 aa).

Transmembrane regions (helical) follow at residues 24-44 (WYALAYIAGLVIGWAYARHLV), 64-84 (LLVYTALGVILGGRLGYVVFY), 99-119 (LWQGGMSFHGGLVGAGVGVML), and 125-145 (GLPTLALGDIVSAVAPIGLFL). An a 1,2-diacyl-sn-glycero-3-phospho-(1'-sn-glycerol)-binding site is contributed by Arg147. Helical transmembrane passes span 185–205 (AAAEGALLFLLLFVAVRLGAL), 209–229 (GLVTGLFAIGYGCARILCEFF), and 245–265 (MGMLLSLPLIAAGLALVAFAY).

It belongs to the Lgt family.

It localises to the cell inner membrane. It carries out the reaction L-cysteinyl-[prolipoprotein] + a 1,2-diacyl-sn-glycero-3-phospho-(1'-sn-glycerol) = an S-1,2-diacyl-sn-glyceryl-L-cysteinyl-[prolipoprotein] + sn-glycerol 1-phosphate + H(+). Its pathway is protein modification; lipoprotein biosynthesis (diacylglyceryl transfer). Functionally, catalyzes the transfer of the diacylglyceryl group from phosphatidylglycerol to the sulfhydryl group of the N-terminal cysteine of a prolipoprotein, the first step in the formation of mature lipoproteins. In Methylocella silvestris (strain DSM 15510 / CIP 108128 / LMG 27833 / NCIMB 13906 / BL2), this protein is Phosphatidylglycerol--prolipoprotein diacylglyceryl transferase.